We begin with the raw amino-acid sequence, 510 residues long: GMP synthase [glutamine-hydrolyzing] (510 aa).

The Glutamine amidotransferase type-1 domain occupies 5–195; the sequence is LVIVVDFGGQ…LYEICKADGD (191 aa). Residue Cys82 is the Nucleophile of the active site. Residues His169 and Glu171 contribute to the active site. The GMPS ATP-PPase domain maps to 196–385; sequence WTMENFLEEQ…LEMPEYLVYR (190 aa). 223-229 contributes to the ATP binding site; that stretch reads SGGVDSS.

Homodimer.

It catalyses the reaction XMP + L-glutamine + ATP + H2O = GMP + L-glutamate + AMP + diphosphate + 2 H(+). It functions in the pathway purine metabolism; GMP biosynthesis; GMP from XMP (L-Gln route): step 1/1. In terms of biological role, catalyzes the synthesis of GMP from XMP. The protein is GMP synthase [glutamine-hydrolyzing] of Finegoldia magna (strain ATCC 29328 / DSM 20472 / WAL 2508) (Peptostreptococcus magnus).